A 404-amino-acid chain; its full sequence is Magnesium transporter NIPA4 (404 aa).

Over 1-55 (MELRVSNTSCENGSLLHLYCSSQEVLCQIVNDLSPEVPSNATFHSWQERIRQNYG) the chain is Extracellular. N-linked (GlcNAc...) asparagine glycosylation is found at Asn-7, Asn-12, and Asn-40. Residues 56 to 76 (FYIGLGLAFLSSFLIGSSVIL) form a helical membrane-spanning segment. Topologically, residues 77–102 (KKKGLLRLVATGATRAVDGGFGYLKD) are cytoplasmic. Residues 103 to 123 (AMWWAGFLTMAAGEVANFGAY) traverse the membrane as a helical segment. Ala-124 is a topological domain (extracellular). The helical transmembrane segment at 125–145 (FAPATVVTPLGALSVLISAIL) threads the bilayer. Residues 146–153 (SSYFLRES) lie on the Cytoplasmic side of the membrane. The chain crosses the membrane as a helical span at residues 154–174 (LNLLGKLGCVICVAGSTVMVI). The Extracellular segment spans residues 175 to 195 (HAPEEEKVTTIMEMASKMKDT). Residues 196-216 (GFIVFAVLLLVSCLILIFVIA) form a helical membrane-spanning segment. The Cytoplasmic portion of the chain corresponds to 217–223 (PRYGQRN). A helical membrane pass occupies residues 224–244 (ILIYIIICSVIGAFSVAAVKG). Over 245–261 (LGITIKNFFQGLPVVRH) the chain is Extracellular. The helical transmembrane segment at 262-282 (PLPYILSLILALSLSTQVNFL) threads the bilayer. Over 283–293 (NRALDIFNTSL) the chain is Cytoplasmic. A helical membrane pass occupies residues 294 to 314 (VFPIYYVFFTTVVVTSSIILF). Over 315–324 (KEWYSMSAVD) the chain is Extracellular. Residues 325–345 (IAGTLSGFVTIILGVFMLHAF) traverse the membrane as a helical segment. Residues 346–404 (KDLDISCASLPHMHKNPPPSPAPEPTVIRLEDKNVLVDNIELASTSSPEEKPKVFIIHS) lie on the Cytoplasmic side of the membrane.

It belongs to the NIPA family. Highly expressed in brain, lung, stomach, keratinocytes and leukocytes, and in all other tissues tested except liver, thyroid and fetal brain.

Its subcellular location is the cell membrane. It carries out the reaction Mg(2+)(in) = Mg(2+)(out). Functionally, acts as a Mg(2+) transporter. Can also transport other divalent cations such as Ba(2+), Sr(2+) and Fe(2+) but to a much less extent than Mg(2+). May be a receptor for ligands (trioxilins A3 and B3) from the hepoxilin pathway. This chain is Magnesium transporter NIPA4 (NIPAL4), found in Homo sapiens (Human).